A 503-amino-acid polypeptide reads, in one-letter code: AMP phosphorylase (503 aa).

AMP is bound by residues G168, 194 to 199, and T203; that span reads SRAITS. Residue D256 is the Proton donor of the active site. Positions 264 and 288 each coordinate AMP.

It belongs to the thymidine/pyrimidine-nucleoside phosphorylase family. Type 2 subfamily.

The enzyme catalyses AMP + phosphate = alpha-D-ribose 1,5-bisphosphate + adenine. It carries out the reaction CMP + phosphate = cytosine + alpha-D-ribose 1,5-bisphosphate. It catalyses the reaction UMP + phosphate = alpha-D-ribose 1,5-bisphosphate + uracil. Catalyzes the conversion of AMP and phosphate to adenine and ribose 1,5-bisphosphate (R15P). Exhibits phosphorylase activity toward CMP and UMP in addition to AMP. Functions in an archaeal AMP degradation pathway, together with R15P isomerase and RubisCO. The protein is AMP phosphorylase (deoA) of Pyrococcus abyssi (strain GE5 / Orsay).